The following is a 368-amino-acid chain: Leu/Ile/Val-binding protein homolog 3 (368 aa).

The signal sequence occupies residues 1-23; that stretch reads MNLKLLSSVAFAATIGFASAAYA.

Belongs to the leucine-binding protein family.

Component of an amino-acid transport system. This chain is Leu/Ile/Val-binding protein homolog 3, found in Brucella melitensis biotype 1 (strain ATCC 23456 / CCUG 17765 / NCTC 10094 / 16M).